The following is a 345-amino-acid chain: L-threonine 3-dehydrogenase (345 aa).

C42 is a binding site for Zn(2+). Active-site charge relay system residues include T44 and H47. Zn(2+)-binding residues include H67, E68, C97, C100, C103, and C111. NAD(+) is bound by residues I179, D199, R204, 266-268 (LGI), and 290-291 (IY).

This sequence belongs to the zinc-containing alcohol dehydrogenase family. Homotetramer. It depends on Zn(2+) as a cofactor.

It localises to the cytoplasm. The enzyme catalyses L-threonine + NAD(+) = (2S)-2-amino-3-oxobutanoate + NADH + H(+). The protein operates within amino-acid degradation; L-threonine degradation via oxydo-reductase pathway; glycine from L-threonine: step 1/2. Its function is as follows. Catalyzes the NAD(+)-dependent oxidation of L-threonine to 2-amino-3-ketobutyrate. The polypeptide is L-threonine 3-dehydrogenase (Sinorhizobium fredii (strain NBRC 101917 / NGR234)).